The following is a 219-amino-acid chain: Ribosome hibernation promotion factor (219 aa).

It belongs to the HPF/YfiA ribosome-associated protein family. Long HPF subfamily. In terms of assembly, interacts with 100S ribosomes.

The protein resides in the cytoplasm. Its function is as follows. Required for dimerization of active 70S ribosomes into 100S ribosomes in stationary phase; 100S ribosomes are translationally inactive and sometimes present during exponential growth. This chain is Ribosome hibernation promotion factor, found in Mycobacterium tuberculosis (strain ATCC 25618 / H37Rv).